Consider the following 358-residue polypeptide: UDP-N-acetylglucosamine--N-acetylmuramyl-(pentapeptide) pyrophosphoryl-undecaprenol N-acetylglucosamine transferase (358 aa).

UDP-N-acetyl-alpha-D-glucosamine contacts are provided by residues 11–13 (TGG), asparagine 120, arginine 161, serine 188, and glutamine 282.

It belongs to the glycosyltransferase 28 family. MurG subfamily.

The protein resides in the cell inner membrane. The catalysed reaction is di-trans,octa-cis-undecaprenyl diphospho-N-acetyl-alpha-D-muramoyl-L-alanyl-D-glutamyl-meso-2,6-diaminopimeloyl-D-alanyl-D-alanine + UDP-N-acetyl-alpha-D-glucosamine = di-trans,octa-cis-undecaprenyl diphospho-[N-acetyl-alpha-D-glucosaminyl-(1-&gt;4)]-N-acetyl-alpha-D-muramoyl-L-alanyl-D-glutamyl-meso-2,6-diaminopimeloyl-D-alanyl-D-alanine + UDP + H(+). The protein operates within cell wall biogenesis; peptidoglycan biosynthesis. Cell wall formation. Catalyzes the transfer of a GlcNAc subunit on undecaprenyl-pyrophosphoryl-MurNAc-pentapeptide (lipid intermediate I) to form undecaprenyl-pyrophosphoryl-MurNAc-(pentapeptide)GlcNAc (lipid intermediate II). In Synechococcus sp. (strain WH7803), this protein is UDP-N-acetylglucosamine--N-acetylmuramyl-(pentapeptide) pyrophosphoryl-undecaprenol N-acetylglucosamine transferase.